The primary structure comprises 93 residues: Conotoxin F_Vc1 (93 aa).

Positions 1-22 (MQRGAVLLGVVAFLALWPQAGA) are cleaved as a signal peptide. Residues 23 to 33 (EPYNLNDPDVR) constitute a propeptide that is removed on maturation.

The protein belongs to the conotoxin F superfamily. Post-translationally, contains 4 disulfide bonds. In terms of tissue distribution, expressed by the venom duct.

The protein localises to the secreted. This is Conotoxin F_Vc1 from Conus victoriae (Queen Victoria cone).